Reading from the N-terminus, the 571-residue chain is Sulfite reductase [NADPH] hemoprotein beta-component (571 aa).

[4Fe-4S] cluster is bound by residues C435, C441, C480, and C484. A siroheme-binding site is contributed by C484.

Belongs to the nitrite and sulfite reductase 4Fe-4S domain family. As to quaternary structure, alpha(8)-beta(8). The alpha component is a flavoprotein, the beta component is a hemoprotein. Requires siroheme as cofactor. It depends on [4Fe-4S] cluster as a cofactor.

It carries out the reaction hydrogen sulfide + 3 NADP(+) + 3 H2O = sulfite + 3 NADPH + 4 H(+). The protein operates within sulfur metabolism; hydrogen sulfide biosynthesis; hydrogen sulfide from sulfite (NADPH route): step 1/1. Component of the sulfite reductase complex that catalyzes the 6-electron reduction of sulfite to sulfide. This is one of several activities required for the biosynthesis of L-cysteine from sulfate. This Musicola paradisiaca (strain Ech703) (Dickeya paradisiaca) protein is Sulfite reductase [NADPH] hemoprotein beta-component.